The chain runs to 436 residues: 3-ketoacyl-CoA thiolase (436 aa).

Catalysis depends on cysteine 99, which acts as the Acyl-thioester intermediate. Active-site proton acceptor residues include histidine 392 and cysteine 422.

This sequence belongs to the thiolase-like superfamily. Thiolase family. As to quaternary structure, heterotetramer of two alpha chains (FadJ) and two beta chains (FadI).

The protein localises to the cytoplasm. The enzyme catalyses an acyl-CoA + acetyl-CoA = a 3-oxoacyl-CoA + CoA. It functions in the pathway lipid metabolism; fatty acid beta-oxidation. In terms of biological role, catalyzes the final step of fatty acid oxidation in which acetyl-CoA is released and the CoA ester of a fatty acid two carbons shorter is formed. The sequence is that of 3-ketoacyl-CoA thiolase from Escherichia coli O127:H6 (strain E2348/69 / EPEC).